The sequence spans 1259 residues: Autism susceptibility gene 2 protein (1259 aa).

5 disordered regions span residues 1-87 (MDGP…EEDI), 108-285 (LKPQ…QDCC), 299-470 (CPQV…PPPP), 771-1027 (PNSM…MTVG), and 1119-1146 (REPHDYSHHHHHHHHPLSVDPRREHERG). Over residues 8 to 17 (HGLRKKRRSR) the composition is skewed to basic residues. Residues 28 to 41 (GGLGAGAAGGGGAG) show a composition bias toward gly residues. Residues 108 to 118 (LKPQERVEKRQ) are compositionally biased toward basic and acidic residues. Residues 136 to 147 (HSKKSRLSHPHH) are compositionally biased toward basic residues. Over residues 148–158 (YSSDRENDRNL) the composition is skewed to basic and acidic residues. Residues 177–192 (PGQNSCRDSDSESASG) show a composition bias toward polar residues. The segment covering 276-285 (RSQEKSQDCC) has biased composition (basic and acidic residues). The important for regulation of lamellipodia formation stretch occupies residues 289–472 (IFEPVVLKDP…PTALPPPPPL (184 aa)). Pro residues-rich tracts occupy residues 331-345 (PPQPPPLSTQPPQGP) and 353-365 (APQPQVQRPPRPQ). The span at 386–410 (SLSQPLSAYNSSSLSLNSLSSSRSS) shows a compositional bias: low complexity. Residues 436–447 (PNHSPLHSFTPT) show a composition bias toward polar residues. The span at 801 to 810 (PSFPTPPPWL) shows a compositional bias: pro residues. Basic and acidic residues-rich tracts occupy residues 813–850 (GELERSASAAAHDRDRDVDKRDSSVSKDDKERESVEKR), 876–935 (IRAH…EAKQ), and 960–993 (REAEPRKGEPAYENPKKSSEVKVKEERKEDHDLP). A compositionally biased stretch (basic residues) spans 1125-1134 (SHHHHHHHHP). 2 positions are modified to phosphoserine: serine 1198 and serine 1233. The interval 1217–1259 (LSAPPPLISTLGGRPVSPRRTTPLSAEIRERPPSHTLKDIEAR) is disordered. A compositionally biased stretch (basic and acidic residues) spans 1243 to 1259 (EIRERPPSHTLKDIEAR).

This sequence belongs to the AUTS2 family. Component of a PRC1-like complex that contains PCGF5, RNF2, CSNK2B, RYBP and AUTS2. Within this complex, interacts directly with PCGF5 and CSNK2B. Interacts with the histone acetyltransferase EP300/p300. Interacts (via Pro-rich region) with PREX1, DOCK1 and ELMO2. As to expression, strongly expressed in brain, skeletal muscle and kidney. Also expressed in placenta, lung and leukocytes.

It is found in the nucleus. It localises to the cytoplasm. The protein localises to the cytoskeleton. Its subcellular location is the cell projection. The protein resides in the growth cone. In terms of biological role, component of a Polycomb group (PcG) multiprotein PRC1-like complex, a complex class required to maintain the transcriptionally repressive state of many genes, including Hox genes, throughout development. PcG PRC1 complex acts via chromatin remodeling and modification of histones; it mediates monoubiquitination of histone H2A 'Lys-119', rendering chromatin heritably changed in its expressibility. The PRC1-like complex that contains PCGF5, RNF2, CSNK2B, RYBP and AUTS2 has decreased histone H2A ubiquitination activity, due to the phosphorylation of RNF2 by CSNK2B. As a consequence, the complex mediates transcriptional activation. In the cytoplasm, plays a role in axon and dendrite elongation and in neuronal migration during embryonic brain development. Promotes reorganization of the actin cytoskeleton, lamellipodia formation and neurite elongation via its interaction with RAC guanine nucleotide exchange factors, which then leads to the activation of RAC1. This Homo sapiens (Human) protein is Autism susceptibility gene 2 protein (AUTS2).